We begin with the raw amino-acid sequence, 370 residues long: MASLCFQSPSKPISYFQPKSNPSPPLFAKVSVFRCRASVQTLVAVEPEPVFVSVKTFAPATVANLGPGFDFLGCAVDGLGDHVTLRVDPSVRAGEVSISEITGTTTKLSTNPLRNCAGIAAIATMKMLGIRSVGLSLDLHKGLPLGSGLGSSAASAAAAAVAVNEIFGRKLGSDQLVLAGLESEAKVSGYHADNIAPAIMGGFVLIRNYEPLDLKPLRFPSDKDLFFVLVSPDFEAPTKKMRAALPTEIPMVHHVWNSSQAAALVAAVLEGDAVMLGKALSSDKIVEPTRAPLIPGMEAVKKAALEAGAFGCTISGAGPTAVAVIDSEEKGQVIGEKMVEAFWKVGHLKSVASVKKLDNVGARLVNSVSR.

The N-terminal 34 residues, 1 to 34 (MASLCFQSPSKPISYFQPKSNPSPPLFAKVSVFR), are a transit peptide targeting the chloroplast. 143–154 (LPLGSGLGSSAA) is a binding site for ATP.

The protein belongs to the GHMP kinase family. Homoserine kinase subfamily.

It localises to the plastid. Its subcellular location is the chloroplast stroma. It catalyses the reaction L-homoserine + ATP = O-phospho-L-homoserine + ADP + H(+). The protein operates within amino-acid biosynthesis; L-threonine biosynthesis; L-threonine from L-aspartate: step 4/5. Its function is as follows. Catalyzes the ATP-dependent phosphorylation of L-homoserine to L-homoserine phosphate. Is specific for L-homoserine and cannot use other substrates such D-serine, L-serine, D-threonine and L-threonine, galactose or D-homoserine in vitro. Required for susceptibility to the downy mildew pathogen Hyaloperonospora parasitica. The chain is Homoserine kinase (HSK) from Arabidopsis thaliana (Mouse-ear cress).